A 122-amino-acid chain; its full sequence is Large ribosomal subunit protein uL14 (122 aa).

This sequence belongs to the universal ribosomal protein uL14 family. As to quaternary structure, part of the 50S ribosomal subunit. Forms a cluster with proteins L3 and L19. In the 70S ribosome, L14 and L19 interact and together make contacts with the 16S rRNA in bridges B5 and B8.

Binds to 23S rRNA. Forms part of two intersubunit bridges in the 70S ribosome. The chain is Large ribosomal subunit protein uL14 from Methylibium petroleiphilum (strain ATCC BAA-1232 / LMG 22953 / PM1).